We begin with the raw amino-acid sequence, 245 residues long: uncharacterized protein (245 aa).

To M.tuberculosis Rv2927c.

This is an uncharacterized protein from Mycobacterium leprae (strain TN).